A 572-amino-acid chain; its full sequence is DNA polymerase (572 aa).

The interval 1–222 (MSRKMFSCDF…LPMDKEIRKA (222 aa)) is 3'-5' exonuclease and strand displacement activities. The interval 56-66 (YFHNLKFDGAF) is interaction with the primer terminal protein. 2 residues coordinate Mg(2+): Asp-142 and Asp-166. Residues 223 to 226 (YRGG) are DNA-binding; Involved in the formation of a stable complex between TP and phi29 DNA polymerase. An initiation, polymerization and pyrophosphorolytic activities region spans residues 227-572 (FTWLNDKYKE…VLVDSVFTIK (346 aa)). Residues Asp-246 and Val-247 each coordinate Mg(2+). Positions 251, 368, and 380 each coordinate 5-methyl-UTP. Asp-453 and Asp-455 together coordinate Mg(2+). A 5-methyl-UTP-binding site is contributed by Asp-455.

The protein belongs to the DNA polymerase type-B family. As to quaternary structure, interacts with the primer terminal protein; this interaction allows the initiation of TP-primed DNA replication at both viral DNA ends. Interacts with DNA. Mg(2+) serves as cofactor.

The enzyme catalyses DNA(n) + a 2'-deoxyribonucleoside 5'-triphosphate = DNA(n+1) + diphosphate. Its function is as follows. Polymerase responsible for protein-primed viral DNA replication by strand displacement with high processivity and fidelity. To start replication, the DNA polymerase forms a heterodimer with a free primer terminal protein (TP), recognizes the replication origins at both 5' ends of the linear chromosome, and initiates replication using as primer the OH-group of Ser-232 of the TP. This polymerase possesses three enzymatic activities: DNA synthesis (polymerase), primer terminal protein (TP) deoxynucleotidylation, which is the formation of a covalent linkage (phosphoester) between the hydroxyl group of a specific serine residue in TP and 5'-dAMP, a reaction directed by the third T at the 3' end, and 3' to 5' exonuclease activity. Exonuclease activity has a proofreading purpose. Since the polymerase initiates the replication on the third thymine, the TP-dAMP initiation product translocates backwards to recover the template information of the 2 terminal nucleotide (sliding back-mechanism). This Bacillus phage Nf (Bacteriophage Nf) protein is DNA polymerase.